The primary structure comprises 482 residues: Glycogen synthase (482 aa).

An ADP-alpha-D-glucose-binding site is contributed by K20.

It belongs to the glycosyltransferase 1 family. Bacterial/plant glycogen synthase subfamily.

It catalyses the reaction [(1-&gt;4)-alpha-D-glucosyl](n) + ADP-alpha-D-glucose = [(1-&gt;4)-alpha-D-glucosyl](n+1) + ADP + H(+). The protein operates within glycan biosynthesis; glycogen biosynthesis. Synthesizes alpha-1,4-glucan chains using ADP-glucose. The sequence is that of Glycogen synthase from Aliivibrio salmonicida (strain LFI1238) (Vibrio salmonicida (strain LFI1238)).